The sequence spans 382 residues: Galactokinase (382 aa).

Substrate is bound at residue 34–37; that stretch reads EHTD. Residue 124–130 coordinates ATP; sequence GAGLSSS. Residues Ser130 and Glu162 each contribute to the Mg(2+) site. Catalysis depends on Asp174, which acts as the Proton acceptor. Tyr223 contributes to the substrate binding site.

The protein belongs to the GHMP kinase family. GalK subfamily.

It is found in the cytoplasm. It carries out the reaction alpha-D-galactose + ATP = alpha-D-galactose 1-phosphate + ADP + H(+). It functions in the pathway carbohydrate metabolism; galactose metabolism. Its function is as follows. Catalyzes the transfer of the gamma-phosphate of ATP to D-galactose to form alpha-D-galactose-1-phosphate (Gal-1-P). In Escherichia coli O1:K1 / APEC, this protein is Galactokinase.